Reading from the N-terminus, the 878-residue chain is Microtubule-associated protein homolog maph-1.1 (878 aa).

2 disordered regions span residues 224 to 425 and 456 to 518; these read ALSD…AQAT and EIPP…PVVP. 4 stretches are compositionally biased toward low complexity: residues 241–268, 278–293, 310–321, and 328–339; these read PSAR…APRA, SRPT…PRTA, APTRAPVPARSA, and APAKPAANTAKA. Composition is skewed to basic and acidic residues over residues 416 to 425 and 480 to 496; these read PPRHEVAQAT and EEDK…KPDP.

This sequence belongs to the MAP1A/MAP1B/MAP1S family. Interacts with dlg-1.

The protein localises to the cell projection. The protein resides in the dendrite. It localises to the perikaryon. It is found in the axon. Its subcellular location is the cytoplasm. The protein localises to the cytoskeleton. The chain is Microtubule-associated protein homolog maph-1.1 from Caenorhabditis elegans.